Here is a 238-residue protein sequence, read N- to C-terminus: Ribosomal RNA small subunit methyltransferase G (238 aa).

S-adenosyl-L-methionine-binding positions include Gly78, 129-130 (AE), and Arg148.

Belongs to the methyltransferase superfamily. RNA methyltransferase RsmG family.

It localises to the cytoplasm. Its function is as follows. Specifically methylates the N7 position of a guanine in 16S rRNA. In Caldicellulosiruptor bescii (strain ATCC BAA-1888 / DSM 6725 / KCTC 15123 / Z-1320) (Anaerocellum thermophilum), this protein is Ribosomal RNA small subunit methyltransferase G.